The primary structure comprises 264 residues: Apolipoprotein A-I (264 aa).

A signal peptide spans 1 to 18; it reads MKAVVLTVAVLFLTGSQA. Repeat copies occupy residues 67–88 and 89–110. The interval 67-264 is 10 X approximate tandem repeats; the sequence is LKLLDNWDTL…DDAAKKLSSQ (198 aa). A Methionine sulfoxide modification is found at Met109. The stretch at 111-121 is one 3; half-length repeat; it reads KDLEEVKQKVQ. 3 tandem repeats follow at residues 122-143, 144-165, and 166-187. A 7; truncated repeat occupies 188 to 207; that stretch reads PYSDKMRERLAERLTALKDS. Met193 carries the post-translational modification Methionine sulfoxide. The stretch at 208 to 229 is repeat 8; it reads ASFAEYHAKASEHLKTLREKAK. The 9; half-length repeat unit spans residues 230–240; the sequence is PAIEDLGQGLL. Residues 241 to 264 form repeat 10; the sequence is PVLENLKASFLSAIDDAAKKLSSQ.

Belongs to the apolipoprotein A1/A4/E family. As to quaternary structure, homodimer. Interacts with APOA1BP and CLU. Component of a sperm activating protein complex (SPAP), consisting of APOA1, an immunoglobulin heavy chain, an immunoglobulin light chain and albumin. Interacts with NDRG1. Interacts with SCGB3A2. Interacts with NAXE and YJEFN3. In terms of processing, glycosylated. Palmitoylated. Post-translationally, phosphorylation sites are present in the extracellular medium.

It is found in the secreted. In terms of biological role, participates in the reverse transport of cholesterol from tissues to the liver for excretion by promoting cholesterol efflux from tissues and by acting as a cofactor for the lecithin cholesterol acyltransferase (LCAT). As part of the SPAP complex, activates spermatozoa motility. The polypeptide is Apolipoprotein A-I (APOA1) (Castor canadensis (American beaver)).